A 1673-amino-acid polypeptide reads, in one-letter code: MPALRPALLWALLALWLCWAAPAHALQCRDGYEPCVNKGMCVTYHSGTGYCKCPEGFLGEYCQHRDPCEKNRCQNGGTCVAQAMLGKATCRCASGFTGEDCQYSTPHPCFVSRPCLNGGTCHMLSRDTYECTCQVGFTGKECQWTDACLSHLCANGSTCTTVANQFSCKCLTGFTGQKCETDVNECDIPGHCQHGGTCLNLPGSYQCQCLQGFTGQYCDRLYVPCAHSPCVNGGTCRQTGDFTFECNCLPVPDSTSSATNVSMVVSAGHWSSEKAEMNILEINETLRPQLPENKQQLRNLKEKCFLTQLAGFLANRQKKYKYEECKDLIKFMLRNERQFKEEKLAEQLKQAEELRQYKVLVHSQERELTQLKEKLREGRDASRSLNEHLQALLTPDEPDKSQGQDLQEQLAEGCRLAQHLVQKLSPENDEDEDEDVQVEEDEKVLESSAPREVQKTEESKVPEDSLEECAITCSNSHGPCDSNQPHKNIKITFEEDEVNSTLVVDRESSHDECQDALNILPVPGPTSSATNVSMVVSAGPLSGEKAAINILEINEKLRPQLAEKKQQFRNLKEKCFLTQLAGFLANQQNKYKYEECKDLIKSMLRNERQFKEEKLAEQLKQAEELRQYKVLVHAQERELTQLREKLREGRDASRSLNEHLQALLTPDEPDKSQGQDLQEQLAEGCRLAQHLVQKLSPENDNDDDEDVQVEVAEKVQKSSAPREMQKAEEKEVPEDSLEECAITCSNSHGPYDCNQPHRKTKITFEEDKVDSTLIGSSSHVEWEDAVHIIPENESDDEEEEEKGPVSPRNLQESEEEEVPQESWDEGYSTLSIPPEMLASYKSYSSTFHSLEEQQVCMAVDIGRHRWDQVKKEDHEATGPRLSRELLDEKGPEVLQDSLDRCYSTPSGCLELTDSCQPYRSAFYVLEQQRVGLAVDMDEIEKYQEVEEDQDPSCPRLSGELLDEKEPEVLQESLDRCYSTPSGCLELTDSCQPYRSAFYILEQQRVGLAVDMDEIEKYQEVEEDQDPSCPRLSGELLDEKEPEVLQESLDRCYSTPSGCLELTDSCQPYRSAFYILEQQRVGLAVDMDEIEKYQEVEEDQDPSCPRLSRELLDEKEPEVLQDSLGRCYSTPSGYLELPDLGQPYSSAVYSLEEQYLGLALDVDRIKKDQEEEEDQGPPCPRLSRELLEVVEPEVLQDSLDRCYSTPSSCLEQPDSCQPYGSSFYALEEKHVGFSLDVGEIEKKGKGKKRRGRRSKKERRRGRKEGEEDQNPPCPRLSRELLDEKGPEVLQDSLDRCYSTPSGCLELTDSCQPYRSAFYILEQQRVGLAVDMDEIEKYQEVEEDQDPSCPRLSRELLEVVEPEVLQDSLDRCYSTPSSCLEQPDSCQPYGSSFYALEEKHVGFSLDVGEIEKYQEVEEDQDPSCPRLSRELLDEKEPEVLQDSLGRCYSTPSGYLELPDLGQPYSSAVYSLEEQYLGLALDVDRIKKDQEEEEDQGPPCPRLSRELLEVVEPEVLQDSLDRCYSTPSSCLEQPDSCQPYGSSFYALEEKHVGFSLDVGEIEKKGKGKKRRGRRSKKERRRGRKEGEEDQNPPCPRLNSMLMEVEEPEVLQDSLDICYSTPSMYFELPDSFQHYRSVFYSFEEEHISFALYVDNRFFTLTVTSLHLVFQMGVIFPQ.

EGF-like domains follow at residues 24-63 (HALQCRDGYEPCVNKGMCVTYHSGTGYCKCPEGFLGEYCQ), 64-102 (HRDPCEKNRCQNGGTCVAQAMLGKATCRCASGFTGEDCQ), 105-143 (TPHPCFVSRPCLNGGTCHMLSRDTYECTCQVGFTGKECQ), and 144-180 (WTDACLSHLCANGSTCTTVANQFSCKCLTGFTGQKCE). 17 disulfide bridges follow: C28/C41, C35/C51, C53/C62, C68/C79, C73/C90, C92/C101, C109/C121, C115/C131, C133/C142, C148/C159, C153/C168, C170/C179, C186/C198, C192/C207, C209/C218, C225/C236, and C230/C246. The region spanning 182–219 (DVNECDIPGHCQHGGTCLNLPGSYQCQCLQGFTGQYCD) is the EGF-like 5; calcium-binding domain. One can recognise an EGF-like 6 domain in the interval 221–258 (LYVPCAHSPCVNGGTCRQTGDFTFECNCLPVPDSTSSA). A coiled-coil region spans residues 337–381 (RQFKEEKLAEQLKQAEELRQYKVLVHSQERELTQLKEKLREGRDA). Disordered stretches follow at residues 423 to 463 (KLSP…KVPE), 713 to 734 (EKVQKSSAPREMQKAEEKEVPE), and 782 to 828 (WEDA…EGYS). Residues 427–443 (ENDEDEDEDVQVEEDEK) are compositionally biased toward acidic residues. 13 consecutive Olduvai domains span residues 427 to 521 (ENDE…NILP), 698 to 790 (ENDN…HIIP), 791 to 879 (ENES…ATGP), 882 to 937 (SREL…VDMD), 938 to 1029 (EIEK…PSCP), 1032 to 1104 (SGEL…PSCP), 1107 to 1162 (SREL…LDVD), 1163 to 1255 (RIKK…RSKK), 1256 to 1348 (ERRR…PSCP), 1351 to 1423 (SREL…PSCP), 1426 to 1481 (SREL…LDVD), 1482 to 1574 (RIKK…RSKK), and 1575 to 1673 (ERRR…IFPQ). A compositionally biased stretch (basic and acidic residues) spans 452–463 (EVQKTEESKVPE). Composition is skewed to acidic residues over residues 792 to 801 (NESDDEEEEE) and 812 to 824 (ESEEEEVPQESWD). The disordered stretch occupies residues 1242 to 1280 (KGKGKKRRGRRSKKERRRGRKEGEEDQNPPCPRLSRELL). A compositionally biased stretch (basic residues) spans 1243–1261 (GKGKKRRGRRSKKERRRGR). Residues 1561-1594 (KGKGKKRRGRRSKKERRRGRKEGEEDQNPPCPRL) are disordered. The span at 1562–1580 (GKGKKRRGRRSKKERRRGR) shows a compositional bias: basic residues.

It belongs to the NBPF family.

The protein resides in the cytoplasm. This Homo sapiens (Human) protein is NBPF family member NBPF26.